Reading from the N-terminus, the 435-residue chain is Oocyte zinc finger protein XlCOF22 (435 aa).

The segment at 71 to 92 (NANTSAHFSRNRDSDKHERTHT) is disordered. A compositionally biased stretch (basic and acidic residues) spans 80–91 (RNRDSDKHERTH). 12 consecutive C2H2-type zinc fingers follow at residues 97–120 (HSCS…RQSH), 126–148 (FSCS…QRTH), 154–176 (FCCF…RRTH), 182–204 (FSCL…QRTH), 210–232 (FSCL…QRTH), 238–260 (FSCL…QRTH), 266–288 (FSCF…QRTH), 294–316 (FSCS…QRTH), 322–345 (YSCS…RRTH), 351–373 (FSCS…QRTH), 379–402 (FSCS…RQTH), and 408–430 (VSCS…FKIH).

Belongs to the krueppel C2H2-type zinc-finger protein family.

The protein resides in the nucleus. May be involved in transcriptional regulation. The chain is Oocyte zinc finger protein XlCOF22 from Xenopus laevis (African clawed frog).